Consider the following 142-residue polypeptide: Immunoglobulin iota chain (142 aa).

An N-terminal signal peptide occupies residues 1–19 (MAWTSVLLMLLAYLTGCGP). Residues 20–41 (QPMVHQPPLASSSLGATIRLSC) form a framework-1 region. Cysteines 41 and 115 form a disulfide. Residues 42–56 (TLSNDHNIGIYSIYW) are complementarity-determining-1. Residues 57 to 70 (YQQRPGHPPRFLLR) form a framework-2 region. A complementarity-determining-2 region spans residues 71–81 (YFSHSDKHQGP). Residues 82–115 (DIPPRFSGSKDTTRNLGYLSISELQPEDEAVYYC) are framework-3.

Belongs to the immunoglobulin superfamily. In terms of assembly, interacts with IGLL1. Interacts with SYNV1/HRD1 (via N-terminus); this interaction leads to increased VPREB1A ubiquitination and degradation in pre-B cells, possibly through a lysosomal, not proteasomal, pathway. In terms of tissue distribution, only expressed by pre-B-cells.

The protein resides in the endoplasmic reticulum. In terms of biological role, associates with the Ig-mu chain to form a molecular complex that is expressed on the surface of pre-B-cells. This complex presumably regulates Ig gene rearrangements in the early steps of B-cell differentiation. The chain is Immunoglobulin iota chain from Mus musculus (Mouse).